The primary structure comprises 550 residues: Small ribosomal subunit protein uS3m (550 aa).

The interval 112–133 is disordered; the sequence is NDDTEEERNEVGGRGAGKRVES.

It belongs to the universal ribosomal protein uS3 family.

Its subcellular location is the mitochondrion. The protein is Small ribosomal subunit protein uS3m (RPS3) of Oenothera berteroana (Bertero's evening primrose).